Here is a 172-residue protein sequence, read N- to C-terminus: Myosin regulatory light chain 12B (172 aa).

Residues 1–16 show a composition bias toward basic residues; the sequence is MSSKKAKTKTTKKRPQ. The interval 1–20 is disordered; the sequence is MSSKKAKTKTTKKRPQRATS. Thr19 carries the post-translational modification Phosphothreonine; by MLCK and ZIPK/DAPK3. Phosphoserine; by MLCK and ZIPK/DAPK3 is present on Ser20. EF-hand domains are found at residues 29–64, 98–133, and 134–169; these read SQIQ…LGKN, DPED…MGDR, and FTDE…GAKD. Ca(2+) is bound by residues Asp42, Asn44, Asp46, and Asp53.

Myosin is a hexamer of 2 heavy chains and 4 light chains: interacts with myosin heavy chain MYO19. Post-translationally, phosphorylation increases the actin-activated myosin ATPase activity and thereby regulates the contractile activity. It is required to generate the driving force in the migration of the cells but not necessary for localization of myosin-2 at the leading edge. Phosphorylation is reduced following epigallocatechin-3-O-gallate treatment.

Myosin regulatory subunit that plays an important role in regulation of both smooth muscle and nonmuscle cell contractile activity via its phosphorylation. Phosphorylation triggers actin polymerization in vascular smooth muscle. Implicated in cytokinesis, receptor capping, and cell locomotion. In Rattus norvegicus (Rat), this protein is Myosin regulatory light chain 12B (Myl12b).